Here is a 415-residue protein sequence, read N- to C-terminus: Probable tRNA pseudouridine synthase D (415 aa).

The Nucleophile role is filled by Asp83. The 221-residue stretch at 158–378 (GFPNYFGYQR…PGRRRELLIR (221 aa)) folds into the TRUD domain.

This sequence belongs to the pseudouridine synthase TruD family.

The enzyme catalyses uridine(13) in tRNA = pseudouridine(13) in tRNA. Functionally, could be responsible for synthesis of pseudouridine from uracil-13 in transfer RNAs. In Thermococcus gammatolerans (strain DSM 15229 / JCM 11827 / EJ3), this protein is Probable tRNA pseudouridine synthase D.